Consider the following 77-residue polypeptide: SS18-like protein 2 (77 aa).

The short motif at 50–53 (YQHV) is the SH2-binding element.

This sequence belongs to the SS18 family.

In Mus musculus (Mouse), this protein is SS18-like protein 2 (Ss18l2).